Consider the following 156-residue polypeptide: Small ribosomal subunit protein uS7 (156 aa).

The protein belongs to the universal ribosomal protein uS7 family. In terms of assembly, part of the 30S ribosomal subunit. Contacts proteins S9 and S11.

One of the primary rRNA binding proteins, it binds directly to 16S rRNA where it nucleates assembly of the head domain of the 30S subunit. Is located at the subunit interface close to the decoding center, probably blocks exit of the E-site tRNA. The protein is Small ribosomal subunit protein uS7 of Mycobacteroides abscessus (strain ATCC 19977 / DSM 44196 / CCUG 20993 / CIP 104536 / JCM 13569 / NCTC 13031 / TMC 1543 / L948) (Mycobacterium abscessus).